Reading from the N-terminus, the 816-residue chain is Phosphatidylinositol 4-kinase beta (816 aa).

Disordered regions lie at residues 1 to 30 (MGDT…GSLL), 99 to 120 (EEED…RRRR), and 248 to 318 (AHRK…SFSS). Residue Gly2 is modified to N-acetylglycine. Residues 2-68 (GDTVVEPAPL…VKLLHGGVAV (67 aa)) form an interaction with ACBD3 region. Positions 52–242 (CQDVLEKVKL…GTKLRKLILS (191 aa)) constitute a PIK helical domain. Position 258 is a phosphoserine (Ser258). A Phosphothreonine modification is found at Thr263. Phosphoserine is present on residues Ser266, Ser275, Ser277, Ser284, and Ser294. 2 stretches are compositionally biased toward polar residues: residues 278–297 (DATA…SNPK) and 306–318 (SSST…SFSS). The residue at position 428 (Ser428) is a Phosphoserine. Thr438 carries the phosphothreonine modification. Ser511 carries the post-translational modification Phosphoserine. 2 positions are modified to phosphothreonine: Thr517 and Thr519. A PI3K/PI4K catalytic domain is found at 535–801 (EPWQEKVRRI…MVDGSMRSIT (267 aa)). A G-loop region spans residues 541–547 (VRRIREG). Residues 668-676 (QVKDRHNGN) are catalytic loop. Residues 687-711 (HIDFGFILSSSPRNLGFETSAFKLT) form an activation loop region.

The protein belongs to the PI3/PI4-kinase family. Type III PI4K subfamily. Interacts with ARF1 and ARF3 in the Golgi complex, but not with ARF4, ARF5 or ARF6. Interacts with NCS1/FREQ in a calcium-independent manner. Interacts with CALN1/CABP8 and CALN2/CABP7; in a calcium-dependent manner; this interaction competes with NCS1/FREQ binding. Interacts with ACBD3. Interacts with ARMH3, YWHAB, YWHAE, YWHAG, YWHAH, YWHAQ, YWHAZ and SFN. Interacts with GGA2 (via VHS domain); the interaction is important for PI4KB location at the Golgi apparatus membrane. Interacts with ATG9A. Mg(2+) serves as cofactor. The cofactor is Mn(2+).

The protein localises to the endomembrane system. It is found in the mitochondrion outer membrane. It localises to the rough endoplasmic reticulum membrane. The protein resides in the golgi apparatus. Its subcellular location is the golgi apparatus membrane. It catalyses the reaction a 1,2-diacyl-sn-glycero-3-phospho-(1D-myo-inositol) + ATP = a 1,2-diacyl-sn-glycero-3-phospho-(1D-myo-inositol 4-phosphate) + ADP + H(+). Its activity is regulated as follows. Inhibited by wortmannin. Increased kinase activity upon interaction with NCS1/FREQ. In terms of biological role, phosphorylates phosphatidylinositol (PI) in the first committed step in the production of the second messenger inositol-1,4,5,-trisphosphate (PIP). May regulate Golgi disintegration/reorganization during mitosis, possibly via its phosphorylation. Involved in Golgi-to-plasma membrane trafficking. The sequence is that of Phosphatidylinositol 4-kinase beta (PI4KB) from Callithrix jacchus (White-tufted-ear marmoset).